Here is a 660-residue protein sequence, read N- to C-terminus: Bifunctional polymyxin resistance protein ArnA (660 aa).

The segment at 1-304 (MKAVIFAYHD…TLGLVAGARL (304 aa)) is formyltransferase ArnAFT. His104 (proton donor; for formyltransferase activity) is an active-site residue. Residues Arg114 and 136–140 (VKRAD) each bind (6R)-10-formyltetrahydrofolate. Positions 314-660 (RRIRVLILGV…RSVDVAERAS (347 aa)) are dehydrogenase ArnADH. NAD(+) contacts are provided by residues Asp347 and 368-369 (DI). UDP-alpha-D-glucuronate contacts are provided by residues Ala393, Tyr398, and 432 to 433 (TS). Glu434 serves as the catalytic Proton acceptor; for decarboxylase activity. Residues Arg460, Asn492, 526–535 (KLIDGGQQKR), and Tyr613 each bind UDP-alpha-D-glucuronate. The Proton donor; for decarboxylase activity role is filled by Arg619.

This sequence in the N-terminal section; belongs to the Fmt family. UDP-L-Ara4N formyltransferase subfamily. It in the C-terminal section; belongs to the NAD(P)-dependent epimerase/dehydratase family. UDP-glucuronic acid decarboxylase subfamily. In terms of assembly, homohexamer, formed by a dimer of trimers.

It carries out the reaction UDP-alpha-D-glucuronate + NAD(+) = UDP-beta-L-threo-pentopyranos-4-ulose + CO2 + NADH. It catalyses the reaction UDP-4-amino-4-deoxy-beta-L-arabinose + (6R)-10-formyltetrahydrofolate = UDP-4-deoxy-4-formamido-beta-L-arabinose + (6S)-5,6,7,8-tetrahydrofolate + H(+). It participates in nucleotide-sugar biosynthesis; UDP-4-deoxy-4-formamido-beta-L-arabinose biosynthesis; UDP-4-deoxy-4-formamido-beta-L-arabinose from UDP-alpha-D-glucuronate: step 1/3. The protein operates within nucleotide-sugar biosynthesis; UDP-4-deoxy-4-formamido-beta-L-arabinose biosynthesis; UDP-4-deoxy-4-formamido-beta-L-arabinose from UDP-alpha-D-glucuronate: step 3/3. Its pathway is bacterial outer membrane biogenesis; lipopolysaccharide biosynthesis. Bifunctional enzyme that catalyzes the oxidative decarboxylation of UDP-glucuronic acid (UDP-GlcUA) to UDP-4-keto-arabinose (UDP-Ara4O) and the addition of a formyl group to UDP-4-amino-4-deoxy-L-arabinose (UDP-L-Ara4N) to form UDP-L-4-formamido-arabinose (UDP-L-Ara4FN). The modified arabinose is attached to lipid A and is required for resistance to polymyxin and cationic antimicrobial peptides. In Salmonella newport (strain SL254), this protein is Bifunctional polymyxin resistance protein ArnA.